Reading from the N-terminus, the 443-residue chain is UPF0597 protein Dvul_2496 (443 aa).

The interval 156 to 178 (GMERAPEADGTLHGGASCEPSAS) is disordered.

This sequence belongs to the UPF0597 family.

The protein is UPF0597 protein Dvul_2496 of Nitratidesulfovibrio vulgaris (strain DP4) (Desulfovibrio vulgaris).